A 457-amino-acid polypeptide reads, in one-letter code: Phosphatidate cytidylyltransferase (457 aa).

6 helical membrane-spanning segments follow: residues 71–91 (VMISGFFITLASGHAWCIVLI), 154–174 (FIVTNHKFICYCLYLMGFVLF), 188–208 (GSLCVTHMVLLLVVFQAHLII), 214–234 (GLFWFLLPCGLVIVNDIFAYL), 255–275 (GFLGAWFFTALASIILTRILS), and 330–350 (FHALNLATFASLFAPFGGFFA).

The protein belongs to the CDS family. Homodimer. Mg(2+) is required as a cofactor.

It is found in the endoplasmic reticulum membrane. Its subcellular location is the cytoplasmic vesicle. The protein localises to the secretory vesicle. It carries out the reaction a 1,2-diacyl-sn-glycero-3-phosphate + CTP + H(+) = a CDP-1,2-diacyl-sn-glycerol + diphosphate. Its pathway is phospholipid metabolism; CDP-diacylglycerol biosynthesis; CDP-diacylglycerol from sn-glycerol 3-phosphate: step 3/3. In terms of biological role, supplies CDP-diacylglycerol, which may play an important role as both a precursor to phosphoinositide biosynthesis in the plasma membrane and as a negative effector of phosphatidylinositol 4-kinase activity, thereby exerting an effect on cell proliferation via a lipid-dependent signal transduction cascade. This is Phosphatidate cytidylyltransferase (CDS1) from Saccharomyces cerevisiae (strain ATCC 204508 / S288c) (Baker's yeast).